We begin with the raw amino-acid sequence, 638 residues long: Threonine--tRNA ligase (638 aa).

A TGS domain is found at 1–61 (MPEITLPDGS…DNDSKVVIIT (61 aa)). Residues 242-533 (DHRKLGKKHS…LIEQYEAKFP (292 aa)) are catalytic. Positions 333, 384, and 510 each coordinate Zn(2+).

Belongs to the class-II aminoacyl-tRNA synthetase family. In terms of assembly, homodimer. Zn(2+) serves as cofactor.

Its subcellular location is the cytoplasm. It catalyses the reaction tRNA(Thr) + L-threonine + ATP = L-threonyl-tRNA(Thr) + AMP + diphosphate + H(+). Its function is as follows. Catalyzes the attachment of threonine to tRNA(Thr) in a two-step reaction: L-threonine is first activated by ATP to form Thr-AMP and then transferred to the acceptor end of tRNA(Thr). Also edits incorrectly charged L-seryl-tRNA(Thr). The protein is Threonine--tRNA ligase of Prochlorococcus marinus subsp. pastoris (strain CCMP1986 / NIES-2087 / MED4).